A 181-amino-acid chain; its full sequence is ABC transporter E family member 3 (181 aa).

The 157-residue stretch at 20 to 176 (SQIIVMLGEN…KAAFARFHNG (157 aa)) folds into the ABC transporter domain. An ATP-binding site is contributed by 27–34 (GENGTGKT).

The protein belongs to the ABC transporter superfamily. ABCE family. In terms of tissue distribution, mostly expressed in roots and leaves, and, to a lower extent, in stems, flowers and siliques.

The polypeptide is ABC transporter E family member 3 (ABCE3) (Arabidopsis thaliana (Mouse-ear cress)).